The following is a 279-amino-acid chain: Pantothenate synthetase (279 aa).

ATP is bound at residue 31 to 38; it reads MGNLHGGH. Histidine 38 serves as the catalytic Proton donor. A (R)-pantoate-binding site is contributed by glutamine 62. Glutamine 62 lines the beta-alanine pocket. 150-153 lines the ATP pocket; the sequence is GRKD. Position 156 (glutamine 156) interacts with (R)-pantoate. ATP contacts are provided by residues valine 179 and 187-190; that span reads KSSR.

This sequence belongs to the pantothenate synthetase family. Homodimer.

The protein resides in the cytoplasm. The catalysed reaction is (R)-pantoate + beta-alanine + ATP = (R)-pantothenate + AMP + diphosphate + H(+). The protein operates within cofactor biosynthesis; (R)-pantothenate biosynthesis; (R)-pantothenate from (R)-pantoate and beta-alanine: step 1/1. In terms of biological role, catalyzes the condensation of pantoate with beta-alanine in an ATP-dependent reaction via a pantoyl-adenylate intermediate. The protein is Pantothenate synthetase of Stenotrophomonas maltophilia (strain R551-3).